We begin with the raw amino-acid sequence, 386 residues long: Protein DOM34 (386 aa).

This sequence belongs to the eukaryotic release factor 1 family. Pelota subfamily. As to quaternary structure, monomer. Component of the Dom34-Hbs1 complex, also named Pelota-HBS1L complex, composed of DOM34 and HBS1. A divalent metal cation serves as cofactor.

Its subcellular location is the cytoplasm. Its function is as follows. Component of the Dom34-Hbs1 complex, a complex that recognizes stalled ribosomes and triggers the No-Go Decay (NGD) pathway. In the Dom34-Hbs1 complex, DOM34 recognizes ribosomes stalled at the 3' end of an mRNA and engages stalled ribosomes by destabilizing mRNA in the mRNA channel. Following ribosome-binding, the Dom34-Hbs1 complex promotes the disassembly of stalled ribosomes, followed by degradation of damaged mRNAs as part of the NGD pathway. The Dom34-Hbs1 complex is also involved in non-functional rRNA decay. The sequence is that of Protein DOM34 from Saccharomyces cerevisiae (strain ATCC 204508 / S288c) (Baker's yeast).